We begin with the raw amino-acid sequence, 158 residues long: Deoxyuridine 5'-triphosphate nucleotidohydrolase (158 aa).

Residues 66–68 (RSG), asparagine 79, 83–85 (TID), and lysine 93 each bind substrate. The interval 139-158 (RGFGSSGVARKGHYQGKPLA) is disordered.

It belongs to the dUTPase family. It depends on Mg(2+) as a cofactor.

It carries out the reaction dUTP + H2O = dUMP + diphosphate + H(+). It functions in the pathway pyrimidine metabolism; dUMP biosynthesis; dUMP from dCTP (dUTP route): step 2/2. Functionally, this enzyme is involved in nucleotide metabolism: it produces dUMP, the immediate precursor of thymidine nucleotides and it decreases the intracellular concentration of dUTP so that uracil cannot be incorporated into DNA. In Helicobacter hepaticus (strain ATCC 51449 / 3B1), this protein is Deoxyuridine 5'-triphosphate nucleotidohydrolase.